A 706-amino-acid chain; its full sequence is MSENHKLSYVRNIGIGAHIDAGKTTTTERILYYTGVSYSIGEVHDGTTVMDYMKQERDRGITIQSAATTCHWIKKDDCAEQASQKEQEYKINIIDTPGHVDFTIEVGRALRVLDGMIAVFDGVAGVEPQSETVWRQADKYAVPRICFVNKMDRIGADFFRCVQMMKDRLGTKPLVIQLPIGIEDTFKGVIDLVKMKAIVWSNEDLGAKYEYHSIPSNMHAMVEDYRHQLLETVVEVDEEIFNSYVSNEDLSEADIRKCIRKGAISGLFVPVLCGSAFKNKGVQTLLDAVVDYLPSPNDVNSIKAVDVKTEQEISRKVSVDEQFSALAFKVINDPFVGSLTFIRIYSGKLQTGSTVINTTKNQKERISRMLLMHANNRKDIKEAVAGDIVALTGLKSTTTGDTICSLDSQIILEKIEFPKPVIELAVEPKTPADQEKISAALVKLAAEDPSLVFTVDSETNQMVIKGMGELHLEIIIDRMKEEFKVEANVGAPRVAYRETITQSYTVDYTHKKQTGGAGQFARVKIIFEPLEVGAGFQFESKIVGGAIPKEFIPGVEKGLEEIKESGVVAGYPTIDFKATLIDGSFHEVDSSVLAFEIAAKNAFKEGITKAGPKLLGPIMKVEVISPNEYMGDIIGDLNSRSGVIQSMEPRGNTQIINAYVPLGQMFGYVSTLRSLSQGRAQYSMVFSHYEQVSRSIAEKIQAKDKK.

The 290-residue stretch at 8–297 (SYVRNIGIGA…AVVDYLPSPN (290 aa)) folds into the tr-type G domain. GTP is bound by residues 17–24 (AHIDAGKT), 95–99 (DTPGH), and 149–152 (NKMD).

This sequence belongs to the TRAFAC class translation factor GTPase superfamily. Classic translation factor GTPase family. EF-G/EF-2 subfamily.

The protein resides in the cytoplasm. Functionally, catalyzes the GTP-dependent ribosomal translocation step during translation elongation. During this step, the ribosome changes from the pre-translocational (PRE) to the post-translocational (POST) state as the newly formed A-site-bound peptidyl-tRNA and P-site-bound deacylated tRNA move to the P and E sites, respectively. Catalyzes the coordinated movement of the two tRNA molecules, the mRNA and conformational changes in the ribosome. The sequence is that of Elongation factor G from Orientia tsutsugamushi (strain Boryong) (Rickettsia tsutsugamushi).